Consider the following 311-residue polypeptide: DNA repair and recombination protein RadA (311 aa).

104 to 111 (GEFGSGKS) provides a ligand contact to ATP.

It belongs to the eukaryotic RecA-like protein family.

Involved in DNA repair and in homologous recombination. Binds and assemble on single-stranded DNA to form a nucleoprotein filament. Hydrolyzes ATP in a ssDNA-dependent manner and promotes DNA strand exchange between homologous DNA molecules. In Methanobrevibacter smithii (strain ATCC 35061 / DSM 861 / OCM 144 / PS), this protein is DNA repair and recombination protein RadA.